Reading from the N-terminus, the 346-residue chain is Integrin beta-1-binding protein 2 (346 aa).

Residues cysteine 5, cysteine 10, cysteine 24, and histidine 27 each coordinate Zn(2+). One can recognise a CHORD 1 domain in the interval 5 to 64 (CHNKGCGQHFDPQTNLPDSCCHHPGVPVFHDALKGWSCCRKRTVDFSEFLNIKGCTVGPH). The SH3-binding motif lies at 28 to 31 (PGVP). Cysteine 42, cysteine 43, cysteine 59, and histidine 64 together coordinate Zn(2+). An SH3-binding motif is present at residues 70-78 (PEAPQPEGP). The segment at 70–113 (PEAPQPEGPATSSSLLEQKPPNTIPKSAETLRRERPKSDLPPKL) is disordered. Over residues 79 to 94 (ATSSSLLEQKPPNTIP) the composition is skewed to polar residues. Positions 98 to 109 (ETLRRERPKSDL) are enriched in basic and acidic residues. Zn(2+)-binding residues include cysteine 150 and cysteine 155. One can recognise a CHORD 2 domain in the interval 150-209 (CQNPGCDAVYQGSESDATPCTYHPGAPRFHEGMKSWSCCGIQTLDFGVFLAQPGCRVGRH). The short motif at 159 to 162 (YQGS) is the SH2-binding element. Zn(2+) contacts are provided by cysteine 169 and histidine 172. The short motif at 173-176 (PGAP) is the SH3-binding element. Zn(2+)-binding residues include cysteine 187, cysteine 188, cysteine 204, and histidine 209. The CS domain maps to 216-305 (LASCRHDWHQ…ADPGFWAQLE (90 aa)). Positions 235-238 (YGQI) match the SH2-binding motif. Positions 311–346 (AEKSKSGVGLEMDEEESEDSDDDLSWTEEEEEAMGE) are disordered. A compositionally biased stretch (acidic residues) spans 321-346 (EMDEEESEDSDDDLSWTEEEEEAMGE).

Interacts with beta-1 integrin subunit. This interaction is regulated by divalent cations, and it occurs only in absence of calcium.

Functionally, may play a role during maturation and/or organization of muscles cells. This is Integrin beta-1-binding protein 2 (ITGB1BP2) from Sus scrofa (Pig).